The primary structure comprises 108 residues: Small ribosomal subunit protein bS6 (108 aa).

This sequence belongs to the bacterial ribosomal protein bS6 family.

Binds together with bS18 to 16S ribosomal RNA. The chain is Small ribosomal subunit protein bS6 from Dichelobacter nodosus (strain VCS1703A).